The chain runs to 44 residues: MLKIFNTKFIRSAPVVAAVWLSLTAGIIIEFNRFFPDLLFHPMS.

A helical transmembrane segment spans residues 9-29; the sequence is FIRSAPVVAAVWLSLTAGIII.

It belongs to the PsaJ family.

It localises to the cellular thylakoid membrane. Its function is as follows. May help in the organization of the PsaE and PsaF subunits. The polypeptide is Photosystem I reaction center subunit IX (Prochlorococcus marinus subsp. pastoris (strain CCMP1986 / NIES-2087 / MED4)).